A 158-amino-acid polypeptide reads, in one-letter code: NAD(P)H-quinone oxidoreductase subunit J, chloroplastic (158 aa).

Belongs to the complex I 30 kDa subunit family. In terms of assembly, NDH is composed of at least 16 different subunits, 5 of which are encoded in the nucleus.

It localises to the plastid. It is found in the chloroplast thylakoid membrane. The catalysed reaction is a plastoquinone + NADH + (n+1) H(+)(in) = a plastoquinol + NAD(+) + n H(+)(out). It carries out the reaction a plastoquinone + NADPH + (n+1) H(+)(in) = a plastoquinol + NADP(+) + n H(+)(out). Functionally, NDH shuttles electrons from NAD(P)H:plastoquinone, via FMN and iron-sulfur (Fe-S) centers, to quinones in the photosynthetic chain and possibly in a chloroplast respiratory chain. The immediate electron acceptor for the enzyme in this species is believed to be plastoquinone. Couples the redox reaction to proton translocation, and thus conserves the redox energy in a proton gradient. This chain is NAD(P)H-quinone oxidoreductase subunit J, chloroplastic, found in Cryptomeria japonica (Japanese cedar).